Reading from the N-terminus, the 714-residue chain is RanBP-type and C3HC4-type zinc finger-containing protein 1 (714 aa).

Disordered stretches follow at residues 1 to 23 and 152 to 172; these read MSLS…SHLG and SSST…SKAP. Polar residues predominate over residues 14-23; it reads PAQSSSSHLG. The Ubiquitin-like domain maps to 225 to 301; the sequence is LAVVVEDASS…TAFLYLISAR (77 aa). The RanBP2-type zinc-finger motif lies at 394-426; the sequence is RTSIQPGWACPTCTYINKPTRPGCEMCSADRPE. Residues 482–710 are TRIAD supradomain; that stretch reads ERVECRICYV…VNKQRCHPKC (229 aa). Positions 486, 489, 504, 506, 509, 512, 527, 536, 575, 580, 595, 598, 603, 606, 610, 615, 651, and 654 each coordinate Zn(2+). The segment at 486-536 adopts an RING-type 1 zinc-finger fold; sequence CRICYVELESGEGVLLRECLHCFCKECLRSVILMSEDPQVACPYRDESYAC. The segment at 555–615 adopts an IBR-type zinc-finger fold; it reads QHWLQRGLSV…CKAIHEGMNC (61 aa). An RING-type 2; atypical zinc finger spans residues 651–680; that stretch reads CPQCGIIVQKKEGCDWLRCTVCHTEICWVT. Residue cysteine 664 is part of the active site. Zn(2+) contacts are provided by cysteine 669 and cysteine 672.

The protein belongs to the RBR family. In terms of assembly, component of the LUBAC complex (linear ubiquitin chain assembly complex).

The enzyme catalyses [E2 ubiquitin-conjugating enzyme]-S-ubiquitinyl-L-cysteine + [acceptor protein]-L-lysine = [E2 ubiquitin-conjugating enzyme]-L-cysteine + [acceptor protein]-N(6)-ubiquitinyl-L-lysine.. It functions in the pathway protein modification; protein ubiquitination. Its function is as follows. Component of the LUBAC complex which conjugates linear ('Met-1'-linked) polyubiquitin chains to substrates and plays a key role in NF-kappa-B activation and regulation of inflammation. LUBAC conjugates linear polyubiquitin to ikbkg and RIPK1 and is involved in activation of the canonical NF-kappa-B and the JNK signaling pathways. Linear ubiquitination mediated by the LUBAC complex interferes with TNF-induced cell death and thereby prevents inflammation. LUBAC is recruited to the TNF-R1 signaling complex (TNF-RSC) to conjugate linear polyubiquitin to ikbkg and possibly other components contributing to the stability of the complex. The LUBAC complex is also involved in innate immunity by conjugating linear polyubiquitin chains at the surface of bacteria invading the cytosol to form the ubiquitin coat surrounding bacteria. LUBAC is not able to initiate formation of the bacterial ubiquitin coat, and can only promote formation of linear polyubiquitins on pre-existing ubiquitin. The bacterial ubiquitin coat acts as an 'eat-me' signal for xenophagy and promotes NF-kappa-B activation. Binds polyubiquitin of different linkage types. This Danio rerio (Zebrafish) protein is RanBP-type and C3HC4-type zinc finger-containing protein 1 (rbck1).